A 102-amino-acid chain; its full sequence is Small ribosomal subunit protein uS10 (102 aa).

It belongs to the universal ribosomal protein uS10 family. Part of the 30S ribosomal subunit.

Involved in the binding of tRNA to the ribosomes. The sequence is that of Small ribosomal subunit protein uS10 from Saccharolobus islandicus (strain M.16.4 / Kamchatka #3) (Sulfolobus islandicus).